The chain runs to 214 residues: MRDAYLMMVLMDALKEIFDLKEILKSPIRNKKVILFVSLVFILSLVLLYILVVNIKYFSYLGDIIFQNFQKHVENLKITLNEDNLHIILAIWKNNLTVCILNYILGIFSLFVIAVNSYILSYVLYKFGAESFIYLVLPHGIIEIPALILSASGGVLFNMGLVNFLINIKFGTKREVLYYIKESLKLLILSIILFIVAGIVEGTITFKIAKIMFS.

5 helical membrane-spanning segments follow: residues 33–53, 104–124, 132–152, 153–173, and 186–206; these read VILF…ILVV, ILGI…SYVL, FIYL…LSAS, GGVL…FGTK, and LLIL…TITF.

It localises to the cell membrane. This is an uncharacterized protein from Methanocaldococcus jannaschii (strain ATCC 43067 / DSM 2661 / JAL-1 / JCM 10045 / NBRC 100440) (Methanococcus jannaschii).